We begin with the raw amino-acid sequence, 183 residues long: Acireductone dioxygenase (183 aa).

A disordered region spans residues 1–21 (MVQAWYMDSDTTTDQREEHQL). Positions 90, 92, 96, and 135 each coordinate Fe(2+). Histidine 90, histidine 92, glutamate 96, and histidine 135 together coordinate Ni(2+).

Belongs to the acireductone dioxygenase (ARD) family. The cofactor is Fe(2+). Ni(2+) is required as a cofactor.

The protein localises to the cytoplasm. The protein resides in the nucleus. The catalysed reaction is 1,2-dihydroxy-5-(methylsulfanyl)pent-1-en-3-one + O2 = 4-methylsulfanyl-2-oxobutanoate + formate + 2 H(+). It carries out the reaction 1,2-dihydroxy-5-(methylsulfanyl)pent-1-en-3-one + O2 = 3-(methylsulfanyl)propanoate + CO + formate + 2 H(+). Its pathway is amino-acid biosynthesis; L-methionine biosynthesis via salvage pathway; L-methionine from S-methyl-5-thio-alpha-D-ribose 1-phosphate: step 5/6. Catalyzes 2 different reactions between oxygen and the acireductone 1,2-dihydroxy-3-keto-5-methylthiopentene (DHK-MTPene) depending upon the metal bound in the active site. Fe-containing acireductone dioxygenase (Fe-ARD) produces formate and 2-keto-4-methylthiobutyrate (KMTB), the alpha-ketoacid precursor of methionine in the methionine recycle pathway. Ni-containing acireductone dioxygenase (Ni-ARD) produces methylthiopropionate, carbon monoxide and formate, and does not lie on the methionine recycle pathway. The chain is Acireductone dioxygenase from Ixodes scapularis (Black-legged tick).